We begin with the raw amino-acid sequence, 347 residues long: Biotin synthase (347 aa).

The Radical SAM core domain occupies 54–273 (NHVETASLLS…IAVARIMMPK (220 aa)). [4Fe-4S] cluster contacts are provided by C69, C73, and C76. Residues C113, C144, C204, and R277 each contribute to the [2Fe-2S] cluster site.

The protein belongs to the radical SAM superfamily. Biotin synthase family. As to quaternary structure, homodimer. The cofactor is [4Fe-4S] cluster. [2Fe-2S] cluster serves as cofactor.

The enzyme catalyses (4R,5S)-dethiobiotin + (sulfur carrier)-SH + 2 reduced [2Fe-2S]-[ferredoxin] + 2 S-adenosyl-L-methionine = (sulfur carrier)-H + biotin + 2 5'-deoxyadenosine + 2 L-methionine + 2 oxidized [2Fe-2S]-[ferredoxin]. It participates in cofactor biosynthesis; biotin biosynthesis; biotin from 7,8-diaminononanoate: step 2/2. Catalyzes the conversion of dethiobiotin (DTB) to biotin by the insertion of a sulfur atom into dethiobiotin via a radical-based mechanism. This chain is Biotin synthase, found in Afipia carboxidovorans (strain ATCC 49405 / DSM 1227 / KCTC 32145 / OM5) (Oligotropha carboxidovorans).